Consider the following 545-residue polypeptide: Membrane protein insertase YidC (545 aa).

4 helical membrane passes run 350-370, 424-444, 461-481, and 498-518; these read IIGN…AVLY, LPML…FASV, ADPY…QTYL, and PLVF…YWVV.

The protein belongs to the OXA1/ALB3/YidC family. Type 1 subfamily. Interacts with the Sec translocase complex via SecD. Specifically interacts with transmembrane segments of nascent integral membrane proteins during membrane integration.

It localises to the cell inner membrane. In terms of biological role, required for the insertion and/or proper folding and/or complex formation of integral membrane proteins into the membrane. Involved in integration of membrane proteins that insert both dependently and independently of the Sec translocase complex, as well as at least some lipoproteins. Aids folding of multispanning membrane proteins. The polypeptide is Membrane protein insertase YidC (Neisseria meningitidis serogroup B (strain ATCC BAA-335 / MC58)).